Consider the following 117-residue polypeptide: Putative cysteine proteinase inhibitor 7 (117 aa).

The N-terminal stretch at 1-24 is a signal peptide; that stretch reads MTMRTSSLLLAAVAVVAIVAGATA. In terms of domain architecture, Cystatin spans 28–84; that stretch reads GSWEPVDINDPHVQELGRWAVAEEDRGVAAGGLTFERVTDGEKQVVAGVNYRLTLEA. A Secondary area of contact motif is present at residues 71–75; sequence QVVAG.

The protein belongs to the cystatin family. Phytocystatin subfamily.

The protein localises to the secreted. Its function is as follows. Specific inhibitor of cysteine proteinases. Probably involved in the regulation of endogenous processes and in defense against pests and pathogens. This chain is Putative cysteine proteinase inhibitor 7, found in Oryza sativa subsp. japonica (Rice).